We begin with the raw amino-acid sequence, 185 residues long: Ribosome-recycling factor (185 aa).

This sequence belongs to the RRF family.

Its subcellular location is the cytoplasm. In terms of biological role, responsible for the release of ribosomes from messenger RNA at the termination of protein biosynthesis. May increase the efficiency of translation by recycling ribosomes from one round of translation to another. The chain is Ribosome-recycling factor from Thermotoga petrophila (strain ATCC BAA-488 / DSM 13995 / JCM 10881 / RKU-1).